Here is a 37-residue protein sequence, read N- to C-terminus: Large ribosomal subunit protein bL36 (37 aa).

This sequence belongs to the bacterial ribosomal protein bL36 family.

The sequence is that of Large ribosomal subunit protein bL36 from Variovorax paradoxus (strain S110).